We begin with the raw amino-acid sequence, 293 residues long: MASITLTPSEKDIQAFLEHYQTSLAPSKNPYIRYFLKLPQATVSIYTSGKILLQGEGAEKYASFFGYQAVEQTSGQNLPLIGTDEVGNGSYFGGLAVVATFVTPDQHDFLRKLGVGDSKTLTDQKIRQITPILKEKIQHQALLLSPSKYNEVIGDRYNAVSVKVALHNQAIYLLLQKGVQPEKIVIDAFTSAKNYDKYLAQEANRFSNPISLEEKAEGKYLSVAVSSVIARDLFLENLENLGRELGYQLPSGAGTASDKVASQILQAYGMQGLSFCAKLHFKNTEKAKKRLER.

Residues 78–293 form the RNase H type-2 domain; that stretch reads LPLIGTDEVG…TEKAKKRLER (216 aa). Asp-84, Glu-85, and Asp-187 together coordinate a divalent metal cation.

Belongs to the RNase HII family. RnhC subfamily. The cofactor is Mn(2+). It depends on Mg(2+) as a cofactor.

It is found in the cytoplasm. It carries out the reaction Endonucleolytic cleavage to 5'-phosphomonoester.. Its function is as follows. Endonuclease that specifically degrades the RNA of RNA-DNA hybrids. The sequence is that of Ribonuclease HIII from Streptococcus pneumoniae (strain 70585).